Here is a 173-residue protein sequence, read N- to C-terminus: Nicotinamide-nucleotide adenylyltransferase (173 aa).

It belongs to the archaeal NMN adenylyltransferase family.

The protein resides in the cytoplasm. The catalysed reaction is beta-nicotinamide D-ribonucleotide + ATP + H(+) = diphosphate + NAD(+). It participates in cofactor biosynthesis; NAD(+) biosynthesis; NAD(+) from nicotinamide D-ribonucleotide: step 1/1. This Methanosarcina acetivorans (strain ATCC 35395 / DSM 2834 / JCM 12185 / C2A) protein is Nicotinamide-nucleotide adenylyltransferase.